The primary structure comprises 195 residues: Nicotinamide riboside kinase 2 (195 aa).

An ATP-binding site is contributed by 9-17 (GVTNGGKTT). Mg(2+) is bound by residues Thr16 and Asp35. The active-site Proton acceptor is Asp35. Residues 35 to 38 (DDFF) and 54 to 55 (WD) each bind substrate. An ATP-binding site is contributed by Arg130. Substrate is bound by residues Arg131 and 136–137 (YM). ATP-binding positions include 134 to 136 (RTY) and 174 to 176 (KSP).

It belongs to the uridine kinase family. NRK subfamily. In terms of assembly, monomer. Interacts with ITGB1 alone or when associated with alpha-7, but not with alpha-5. As to expression, expressed in skeletal muscle (at protein level).

It carries out the reaction beta-nicotinamide D-riboside + ATP = beta-nicotinamide D-ribonucleotide + ADP + H(+). The catalysed reaction is beta-D-ribosylnicotinate + ATP = nicotinate beta-D-ribonucleotide + ADP + H(+). The protein operates within cofactor biosynthesis; NAD(+) biosynthesis. Functionally, catalyzes the phosphorylation of nicotinamide riboside (NR) and nicotinic acid riboside (NaR) to form nicotinamide mononucleotide (NMN) and nicotinic acid mononucleotide (NaMN). Reduces laminin matrix deposition and cell adhesion to laminin, but not to fibronectin. Involved in the regulation of PXN at the protein level and of PXN tyrosine phosphorylation. May play a role in the regulation of terminal myogenesis. This Mus musculus (Mouse) protein is Nicotinamide riboside kinase 2 (Nmrk2).